Consider the following 287-residue polypeptide: Bifunctional protein FolD (287 aa).

NADP(+) contacts are provided by residues 160–162 (GRS), serine 189, and threonine 230.

The protein belongs to the tetrahydrofolate dehydrogenase/cyclohydrolase family. As to quaternary structure, homodimer.

It catalyses the reaction (6R)-5,10-methylene-5,6,7,8-tetrahydrofolate + NADP(+) = (6R)-5,10-methenyltetrahydrofolate + NADPH. The catalysed reaction is (6R)-5,10-methenyltetrahydrofolate + H2O = (6R)-10-formyltetrahydrofolate + H(+). It functions in the pathway one-carbon metabolism; tetrahydrofolate interconversion. Its function is as follows. Catalyzes the oxidation of 5,10-methylenetetrahydrofolate to 5,10-methenyltetrahydrofolate and then the hydrolysis of 5,10-methenyltetrahydrofolate to 10-formyltetrahydrofolate. The protein is Bifunctional protein FolD of Chlamydia abortus (strain DSM 27085 / S26/3) (Chlamydophila abortus).